Reading from the N-terminus, the 215-residue chain is Kunitz trypsin inhibitor 2 (215 aa).

An N-terminal signal peptide occupies residues 1–23 (MKNPSVISFLIILLFAATICTHG). A disulfide bridge connects residues Cys67 and Cys114. N-linked (GlcNAc...) asparagine glycosylation is present at Asn145.

It belongs to the protease inhibitor I3 (leguminous Kunitz-type inhibitor) family. As to quaternary structure, interacts with RD21A. Interacts with RD21B and RD21C. Expressed in vascular bundles of the carpels, the transmitting tract of the style and septum epidermis. Expressed in etiolated seedlings.

The protein resides in the secreted. Its subcellular location is the cell wall. It localises to the extracellular space. The protein localises to the apoplast. It is found in the endoplasmic reticulum. In terms of biological role, water-soluble and chlorophyll-binding protein that probably does not function as a chloroplast chlorophyll carrier and is not involved in photosynthesis. Involved in the control of cell death in the transmitting tract and septum epidermis during flower development. Binds and inhibits the activity of the cysteine protease RD21A as a pro-death protein. May play a role in herbivore resistance activation during seedling greening. The chain is Kunitz trypsin inhibitor 2 from Arabidopsis thaliana (Mouse-ear cress).